A 464-amino-acid polypeptide reads, in one-letter code: Glutamate--tRNA ligase (464 aa).

The 'HIGH' region motif lies at 11–21 (PSPTGFIHLGN). Positions 243–247 (KMSKR) match the 'KMSKS' region motif. An ATP-binding site is contributed by Lys-246.

The protein belongs to the class-I aminoacyl-tRNA synthetase family. Glutamate--tRNA ligase type 1 subfamily. Monomer.

It localises to the cytoplasm. The catalysed reaction is tRNA(Glu) + L-glutamate + ATP = L-glutamyl-tRNA(Glu) + AMP + diphosphate. Its function is as follows. Catalyzes the attachment of glutamate to tRNA(Glu) in a two-step reaction: glutamate is first activated by ATP to form Glu-AMP and then transferred to the acceptor end of tRNA(Glu). The protein is Glutamate--tRNA ligase of Polaromonas naphthalenivorans (strain CJ2).